Here is a 95-residue protein sequence, read N- to C-terminus: Pyrimidine/purine nucleoside phosphorylase (95 aa).

The protein belongs to the nucleoside phosphorylase PpnP family.

The enzyme catalyses a purine D-ribonucleoside + phosphate = a purine nucleobase + alpha-D-ribose 1-phosphate. It catalyses the reaction adenosine + phosphate = alpha-D-ribose 1-phosphate + adenine. The catalysed reaction is cytidine + phosphate = cytosine + alpha-D-ribose 1-phosphate. It carries out the reaction guanosine + phosphate = alpha-D-ribose 1-phosphate + guanine. The enzyme catalyses inosine + phosphate = alpha-D-ribose 1-phosphate + hypoxanthine. It catalyses the reaction thymidine + phosphate = 2-deoxy-alpha-D-ribose 1-phosphate + thymine. The catalysed reaction is uridine + phosphate = alpha-D-ribose 1-phosphate + uracil. It carries out the reaction xanthosine + phosphate = alpha-D-ribose 1-phosphate + xanthine. Its function is as follows. Catalyzes the phosphorolysis of diverse nucleosides, yielding D-ribose 1-phosphate and the respective free bases. Can use uridine, adenosine, guanosine, cytidine, thymidine, inosine and xanthosine as substrates. Also catalyzes the reverse reactions. In Edwardsiella ictaluri (strain 93-146), this protein is Pyrimidine/purine nucleoside phosphorylase.